The following is a 54-amino-acid chain: Glutathione S-transferase 6.7 (54 aa).

Belongs to the GST superfamily. Theta family. Homodimer. The N-terminus is blocked.

It is found in the cytoplasm. It catalyses the reaction RX + glutathione = an S-substituted glutathione + a halide anion + H(+). In terms of biological role, conjugation of reduced glutathione to a wide number of exogenous and endogenous hydrophobic electrophiles. The sequence is that of Glutathione S-transferase 6.7 from Dicentrarchus labrax (European seabass).